The sequence spans 290 residues: Ribosomal RNA small subunit methyltransferase A (290 aa).

Positions 27, 29, 54, 75, 100, and 125 each coordinate S-adenosyl-L-methionine.

It belongs to the class I-like SAM-binding methyltransferase superfamily. rRNA adenine N(6)-methyltransferase family. RsmA subfamily.

Its subcellular location is the cytoplasm. It catalyses the reaction adenosine(1518)/adenosine(1519) in 16S rRNA + 4 S-adenosyl-L-methionine = N(6)-dimethyladenosine(1518)/N(6)-dimethyladenosine(1519) in 16S rRNA + 4 S-adenosyl-L-homocysteine + 4 H(+). Specifically dimethylates two adjacent adenosines (A1518 and A1519) in the loop of a conserved hairpin near the 3'-end of 16S rRNA in the 30S particle. May play a critical role in biogenesis of 30S subunits. This Streptococcus pyogenes serotype M5 (strain Manfredo) protein is Ribosomal RNA small subunit methyltransferase A.